We begin with the raw amino-acid sequence, 166 residues long: Endoribonuclease YbeY (166 aa).

Zn(2+)-binding residues include His130, His134, and His140.

It belongs to the endoribonuclease YbeY family. Zn(2+) serves as cofactor.

The protein localises to the cytoplasm. Single strand-specific metallo-endoribonuclease involved in late-stage 70S ribosome quality control and in maturation of the 3' terminus of the 16S rRNA. The chain is Endoribonuclease YbeY from Streptococcus uberis (strain ATCC BAA-854 / 0140J).